Consider the following 295-residue polypeptide: Indole-3-glycerol phosphate synthase (295 aa).

It belongs to the TrpC family.

It carries out the reaction 1-(2-carboxyphenylamino)-1-deoxy-D-ribulose 5-phosphate + H(+) = (1S,2R)-1-C-(indol-3-yl)glycerol 3-phosphate + CO2 + H2O. It participates in amino-acid biosynthesis; L-tryptophan biosynthesis; L-tryptophan from chorismate: step 4/5. This chain is Indole-3-glycerol phosphate synthase, found in Synechococcus sp. (strain CC9605).